Reading from the N-terminus, the 715-residue chain is ATP-dependent zinc metalloprotease FtsH (715 aa).

At 1 to 10 the chain is on the cytoplasmic side; sequence MKNKNRGFFR. A helical transmembrane segment spans residues 11-31; the sequence is SSLSYAFVILAVIFLIYSFFG. At 32–137 the chain is on the extracellular side; sequence RSDGSVKHLS…KPAASNFWGS (106 aa). A helical membrane pass occupies residues 138-158; the sequence is MLTLILPTLIMFALLYWMLIG. Over 159-715 the chain is Cytoplasmic; sequence SQRGQGGSGG…LLDAVNNKFD (557 aa). The segment at 167–187 is disordered; the sequence is GGPGGIMSFGRSKAKPADPKQ. 233 to 240 contacts ATP; the sequence is GPPGTGKT. H455 contacts Zn(2+). E456 is an active-site residue. H459 and D531 together coordinate Zn(2+).

It in the central section; belongs to the AAA ATPase family. This sequence in the C-terminal section; belongs to the peptidase M41 family. In terms of assembly, homohexamer. It depends on Zn(2+) as a cofactor.

The protein resides in the cell membrane. Its function is as follows. Acts as a processive, ATP-dependent zinc metallopeptidase for both cytoplasmic and membrane proteins. Plays a role in the quality control of integral membrane proteins. Can complement an E.coli ftsH disruption mutant. In Oenococcus oeni (Leuconostoc oenos), this protein is ATP-dependent zinc metalloprotease FtsH.